Reading from the N-terminus, the 368-residue chain is Chaperone protein DnaJ (368 aa).

Positions 5–70 (DYYQVLGVPR…KKRKLYDTHG (66 aa)) constitute a J domain. The CR-type zinc finger occupies 124–201 (GVERQIQIPT…CNGAGRVEDH (78 aa)). Zn(2+) contacts are provided by Cys-137, Cys-140, Cys-153, Cys-156, Cys-175, Cys-178, Cys-189, and Cys-192. CXXCXGXG motif repeat units follow at residues 137 to 144 (CTHCNGSG), 153 to 160 (CGTCRGSG), 175 to 182 (CPHCGGRG), and 189 to 196 (CKVCNGAG).

This sequence belongs to the DnaJ family. Homodimer. Zn(2+) serves as cofactor.

It is found in the cytoplasm. Participates actively in the response to hyperosmotic and heat shock by preventing the aggregation of stress-denatured proteins and by disaggregating proteins, also in an autonomous, DnaK-independent fashion. Unfolded proteins bind initially to DnaJ; upon interaction with the DnaJ-bound protein, DnaK hydrolyzes its bound ATP, resulting in the formation of a stable complex. GrpE releases ADP from DnaK; ATP binding to DnaK triggers the release of the substrate protein, thus completing the reaction cycle. Several rounds of ATP-dependent interactions between DnaJ, DnaK and GrpE are required for fully efficient folding. Also involved, together with DnaK and GrpE, in the DNA replication of plasmids through activation of initiation proteins. The protein is Chaperone protein DnaJ of Xylella fastidiosa (strain M12).